The following is a 168-amino-acid chain: Bifunctional protein PyrR (168 aa).

Positions 90–102 (LVLIDDVLMSGRT) match the PRPP-binding motif.

The protein belongs to the purine/pyrimidine phosphoribosyltransferase family. PyrR subfamily.

It catalyses the reaction UMP + diphosphate = 5-phospho-alpha-D-ribose 1-diphosphate + uracil. Regulates the transcription of the pyrimidine nucleotide (pyr) operon in response to exogenous pyrimidines. Its function is as follows. Also displays a weak uracil phosphoribosyltransferase activity which is not physiologically significant. The polypeptide is Bifunctional protein PyrR (Pseudomonas fluorescens (strain ATCC BAA-477 / NRRL B-23932 / Pf-5)).